Consider the following 311-residue polypeptide: MALPILLDCDPGHDDAIAIVLALASPELDVKAITSSAGNQTPEKTLRNVLRMLTLLNRTDIPVAGGAVKPLMRELIIADNVHGESGLDGPALPEPAFAPQNCTAVELMAKTLRESAEPITIVSTGPQTNVALLLNSHPELHSKIARIVIMGGAMGLGNWTPAAEFNIYVDPEAAEIVFQSGIPVVMAGLDVTHRAQIHVEDTERFRAIGNPVSTIVAELLDFFLEYHKDEKWGFVGAPLHDPCTIAWLLKPELFTTVERWVGVETQGKYTQGMTVVDYYYLTGNKPNATVMVDVDRQGFVDLLADRLKFYA.

Residue His240 is part of the active site.

This sequence belongs to the IUNH family. RihA subfamily.

In terms of biological role, hydrolyzes with equal efficiency cytidine or uridine to ribose and cytosine or uracil, respectively. The polypeptide is Pyrimidine-specific ribonucleoside hydrolase RihA (Escherichia coli O9:H4 (strain HS)).